The following is a 614-amino-acid chain: MNNLIKSKLELLPTSPGCYIHKDKNGTIIYVGKAKNLRNRVRSYFRGSHDTKTEALVSEIVDFEFIVTESNIEALLLEINLIKENKPKYNIMLKDDKSYPFIKITNERYPRLIITRQVKKDGGLYFGPYPDVGAANEIKRLLDRIFPFRKCTNPPSKVCFYYHIGQCMAHTICKKDEAYFKSMAQEVSDFLKGQDNKIIDELKGKMAAAAQTMEFERAAEYRDLIQAIGTLRTKQRVMAKDLQNRDVFGYYVDKGWMCVQVFFVRQGKLIERDVNLFPYFNDPDEDFLTYVGQFYQEKSHLVPNEVLIPQDIDEEAVKALVDSKILKPQRGEKKQLVNLAIKNARVSLEQKFNLLEKSVEKTQGAIENLGRLLQIPTPVRIESFDNSNIMGTSPVSAMVVFVNGKPSKKDYRKYKIKTVVGPDDYASMREVIRRRYGRVQREALTPPDLIVIDGGQGQVNIAKQVIQEELGLDIPIAGLQKNDKHQTHELLFGDPLEVVDLSRNSQEFFLLQRIQDEVHRFAITFHRQLRSKNSFSSQLDGIDGLGPKRKQNLMKHFKSLTKIKEASVDEIVEVGVPRVVAEAVQRKLNPQGEALPQVAEERVDYQTEGNHNKP.

Residues 14–91 (TSPGCYIHKD…IKENKPKYNI (78 aa)) form the GIY-YIG domain. One can recognise a UVR domain in the interval 196–231 (NKIIDELKGKMAAAAQTMEFERAAEYRDLIQAIGTL). Positions 595-614 (LPQVAEERVDYQTEGNHNKP) are disordered.

It belongs to the UvrC family. As to quaternary structure, interacts with UvrB in an incision complex.

The protein localises to the cytoplasm. Its function is as follows. The UvrABC repair system catalyzes the recognition and processing of DNA lesions. UvrC both incises the 5' and 3' sides of the lesion. The N-terminal half is responsible for the 3' incision and the C-terminal half is responsible for the 5' incision. This is UvrABC system protein C from Streptococcus pneumoniae (strain Taiwan19F-14).